Reading from the N-terminus, the 371-residue chain is Geranylgeranyl pyrophosphate synthase paxG (371 aa).

The isopentenyl diphosphate site is built by K89, R92, and H121. Mg(2+) contacts are provided by D128 and D132. Position 137 (R137) interacts with dimethylallyl diphosphate. An isopentenyl diphosphate-binding site is contributed by R138. K215, T216, and Q249 together coordinate dimethylallyl diphosphate. Mg(2+) is bound at residue D252. Dimethylallyl diphosphate-binding residues include N256, K266, and K276. The Peroxisomal targeting signal signature appears at 369 to 371 (GRV).

This sequence belongs to the FPP/GGPP synthase family. The cofactor is Mg(2+).

It localises to the peroxisome. The enzyme catalyses isopentenyl diphosphate + dimethylallyl diphosphate = (2E)-geranyl diphosphate + diphosphate. The catalysed reaction is isopentenyl diphosphate + (2E)-geranyl diphosphate = (2E,6E)-farnesyl diphosphate + diphosphate. It carries out the reaction isopentenyl diphosphate + (2E,6E)-farnesyl diphosphate = (2E,6E,10E)-geranylgeranyl diphosphate + diphosphate. The protein operates within secondary metabolite biosynthesis. Functionally, geranylgeranyl pyrophosphate synthase; part of the gene cluster that mediates the biosynthesis of paxilline, a mycotoxin that acts as an inhibitor of mammalian maxi-K channels. PaxG, the geranylgeranyl diphosphate (GGPP) synthase is proposed to catalyze the first step in paxilline biosynthesis. Condensation of indole-3-glycerol phosphate with GGPP by paxC then forms 3-geranylgeranylindole (3-GGI), followed by epoxidation and cyclization of this intermediate (by paxM and paxB) to form paspaline. Paspaline is subsequently converted to 13-desoxypaxilline by paxP, the latter being then converted to paxilline by paxQ. Finally paxilline can be mono- and di-prenylated by paxD. This chain is Geranylgeranyl pyrophosphate synthase paxG, found in Penicillium paxilli.